A 331-amino-acid chain; its full sequence is C-type lectin domain family 4 member K (331 aa).

The Cytoplasmic portion of the chain corresponds to 1-41 (MPEAEMKEEAPEAHFTVDKQNISLWPREPPPKQDLSPVLRK). The helical; Signal-anchor for type II membrane protein transmembrane segment at 42–62 (PLCICVAFTCLALVLVTSIVL) threads the bilayer. The Extracellular portion of the chain corresponds to 63 to 331 (QAVFYPRLMG…CKRPYVQTTE (269 aa)). N-linked (GlcNAc...) asparagine glycans are attached at residues N90 and N116. The stretch at 106–197 (DDAEVQMQIV…LKQQSDILEM (92 aa)) forms a coiled coil. Positions 205 to 323 (FSGNFYYFSR…CDNTFLFICK (119 aa)) constitute a C-type lectin domain. 2 cysteine pairs are disulfide-bonded: C226-C322 and C298-C314.

In terms of assembly, homotrimer. Expressed by Langerhans cells. Expressed in dendritic cells and by scattered cells in lymph nodes and spleen. Also detected in some non-lymphoid tissues such as lung, liver and heart.

Its subcellular location is the membrane. Functionally, calcium-dependent lectin displaying mannose-binding specificity. Induces the formation of Birbeck granules (BGs); is a potent regulator of membrane superimposition and zippering. Binds to sulfated as well as mannosylated glycans, keratan sulfate (KS) and beta-glucans. Facilitates uptake of antigens and is involved in the routing and/or processing of antigen for presentation to T cells. This chain is C-type lectin domain family 4 member K (Cd207), found in Mus musculus (Mouse).